We begin with the raw amino-acid sequence, 231 residues long: 3-oxoadipate CoA-transferase subunit A (231 aa).

Position 25-31 (25-31) interacts with CoA; the sequence is GGFGTAG.

It belongs to the 3-oxoacid CoA-transferase subunit A family. In terms of assembly, heterodimer.

It carries out the reaction 3-oxoadipate + succinyl-CoA = 3-oxoadipyl-CoA + succinate. It functions in the pathway aromatic compound metabolism; beta-ketoadipate pathway; acetyl-CoA and succinyl-CoA from 3-oxoadipate: step 1/2. The protein is 3-oxoadipate CoA-transferase subunit A (pcaI) of Pseudomonas putida (Arthrobacter siderocapsulatus).